Reading from the N-terminus, the 163-residue chain is Nucleotide-binding protein ROP_16630 (163 aa).

The protein belongs to the YajQ family.

Functionally, nucleotide-binding protein. This chain is Nucleotide-binding protein ROP_16630, found in Rhodococcus opacus (strain B4).